A 78-amino-acid polypeptide reads, in one-letter code: D-alanyl carrier protein (78 aa).

Residues 1-78 (MEFKNQVYGI…HIAEQLAEMK (78 aa)) form the Carrier domain. S36 is modified (O-(pantetheine 4'-phosphoryl)serine).

This sequence belongs to the DltC family. Post-translationally, 4'-phosphopantetheine is transferred from CoA to a specific serine of apo-DCP.

The protein resides in the cytoplasm. Its pathway is cell wall biogenesis; lipoteichoic acid biosynthesis. Carrier protein involved in the D-alanylation of lipoteichoic acid (LTA). The loading of thioester-linked D-alanine onto DltC is catalyzed by D-alanine--D-alanyl carrier protein ligase DltA. The DltC-carried D-alanyl group is further transferred to cell membrane phosphatidylglycerol (PG) by forming an ester bond, probably catalyzed by DltD. D-alanylation of LTA plays an important role in modulating the properties of the cell wall in Gram-positive bacteria, influencing the net charge of the cell wall. The sequence is that of D-alanyl carrier protein from Bacillus pumilus (strain SAFR-032).